The primary structure comprises 99 residues: SAGA-associated factor 11 (99 aa).

The SGF11-type zinc finger occupies 71 to 92 (IHCENCGRDVSANRLAAHLQRC).

Belongs to the SGF11 family. Component of the 1.8 MDa SAGA transcription coactivator-HAT complex. SAGA is built of 5 distinct domains with specialized functions. Within the SAGA complex, SUS1, SGF11, SGF73 and UBP8 form an additional subcomplex of SAGA called the DUB module (deubiquitination module). Interacts directly with SGF73, SUS1 and UBP8.

It localises to the nucleus. Functionally, functions as a component of the transcription regulatory histone acetylation (HAT) complex SAGA. At the promoters, SAGA is required for recruitment of the basal transcription machinery. It influences RNA polymerase II transcriptional activity through different activities such as TBP interaction and promoter selectivity, interaction with transcription activators, and chromatin modification through histone acetylation and deubiquitination. SAGA acetylates nucleosomal histone H3 to some extent (to form H3K9ac, H3K14ac, H3K18ac and H3K23ac). SAGA interacts with DNA via upstream activating sequences (UASs). Involved in transcriptional regulation of a subset of SAGA-regulated genes. Within the SAGA complex, participates in a subcomplex, that specifically deubiquitinates histones H2B. This chain is SAGA-associated factor 11, found in Saccharomyces cerevisiae (strain YJM789) (Baker's yeast).